Reading from the N-terminus, the 159-residue chain is Putative pre-16S rRNA nuclease (159 aa).

Belongs to the YqgF nuclease family.

The protein resides in the cytoplasm. Could be a nuclease involved in processing of the 5'-end of pre-16S rRNA. The chain is Putative pre-16S rRNA nuclease from Synechococcus sp. (strain JA-3-3Ab) (Cyanobacteria bacterium Yellowstone A-Prime).